The chain runs to 207 residues: MKSYTALLAVAILCLFAAVGVSGKCTKNALAQTGFNKDKYFNGDVWYVTDYLDLEPDDVPKRYCAALAAGTASGKLKEALYHYDPKTQDTFYDVSELQEESPGKYTANFKKVEKNGNVKVDVTSGNYYTFTVMYADDSSALIHTCLHKGNKDLGDLYAVLNRNKDTNAGDKVKGAVTAASLKFSDFISTKDNKCEYDNVSLKSLLTK.

A signal peptide spans 1 to 23 (MKSYTALLAVAILCLFAAVGVSG). 2 disulfides stabilise this stretch: Cys25–Cys145 and Cys64–Cys194. His82 provides a ligand contact to heme.

The protein belongs to the calycin superfamily. Nitrophorin family. In terms of tissue distribution, salivary gland (at protein level).

It localises to the secreted. Functionally, heme-based protein that deliver nitric oxide gas (NO) to the victim while feeding, resulting in vasodilation and inhibition of platelet aggregation. Reversibly binds nitric oxide (NO). Also binds tightly to histamine, which is released by the host to induce wound healing. This chain is Nitrophorin-1, found in Rhodnius prolixus (Triatomid bug).